The primary structure comprises 684 residues: Probable potassium transport system protein Kup (684 aa).

The next 12 helical transmembrane spans lie at 19–39 (ALLV…LYVM), 61–81 (VSLI…LIAL), 104–124 (WLVL…MLTP), 151–171 (QVIW…RFGT), 177–197 (AFGP…FIAL), 223–243 (MGLF…ALYS), 255–275 (LSWP…AVWL), 303–323 (LGAI…LISG), 352–372 (LYIP…IGYF), 381–401 (AYGL…YQYL), 407–427 (PAVI…VFFI), and 433–453 (FLHG…VMYV).

This sequence belongs to the HAK/KUP transporter (TC 2.A.72) family.

Its subcellular location is the cell membrane. The enzyme catalyses K(+)(in) + H(+)(in) = K(+)(out) + H(+)(out). Transport of potassium into the cell. Likely operates as a K(+):H(+) symporter. This is Probable potassium transport system protein Kup from Lacticaseibacillus casei (strain BL23) (Lactobacillus casei).